A 1752-amino-acid chain; its full sequence is DNA-directed RNA polymerase II subunit rpb1 (1752 aa).

Zn(2+) contacts are provided by C69, C72, C79, H82, C109, C112, C150, and C175. Positions 487, 489, and 491 each coordinate Mg(2+). A bridging helix region spans residues 816–828; that stretch reads PQEFFFHAMAGRE. A Glycyl lysine isopeptide (Lys-Gly) (interchain with G-Cter in ubiquitin) cross-link involves residue K1252. Residues S1489, S1499, S1506, and S1529 each carry the phosphoserine modification. Phosphotyrosine is present on Y1531. The tract at residues 1554-1752 is disordered; the sequence is TSPSYSPSSP…SPSYSPTSPS (199 aa). 5 consecutive repeat copies span residues 1558–1564, 1578–1584, 1585–1591, 1592–1598, and 1599–1605. A C-terminal domain (CTD); 26 X 7 AA approximate tandem repeats of Y-S-P-[TS]-S-P-S region spans residues 1558–1752; that stretch reads YSPSSPGYST…SPSYSPTSPS (195 aa). The stretch at 1606–1612 is one 6; approximate repeat; that stretch reads YSATSPS. Tandem repeats lie at residues 1613 to 1619, 1620 to 1626, 1627 to 1633, 1634 to 1640, 1641 to 1647, 1648 to 1654, 1655 to 1661, 1662 to 1668, 1669 to 1675, 1676 to 1682, 1683 to 1689, 1690 to 1696, 1697 to 1703, 1704 to 1710, 1711 to 1717, 1718 to 1724, 1725 to 1731, 1732 to 1738, 1739 to 1745, and 1746 to 1752.

Belongs to the RNA polymerase beta' chain family. In terms of assembly, component of the RNA polymerase II (Pol II) complex consisting of 12 subunits. Post-translationally, the tandem 7 residues repeats in the C-terminal domain (CTD) can be highly phosphorylated. The phosphorylation activates Pol II. Phosphorylation occurs mainly at residues 'Ser-2' and 'Ser-5' of the heptapeptide repeat. The phosphorylation state is believed to result from the balanced action of site-specific CTD kinases and phosphatase, and a 'CTD code' that specifies the position of Pol II within the transcription cycle has been proposed. In terms of processing, following transcription stress, the elongating form of RNA polymerase II (RNA pol IIo) is polyubiquitinated via 'Lys-63'-linkages on Lys-1252 at DNA damage sites without leading to degradation: ubiquitination promotes RNA pol IIo backtracking to allow access by the transcription-coupled nucleotide excision repair (TC-NER) machinery. Subsequent def1-dependent polyubiquitination by the elongin complex via 'Lys-48'-linkages may lead to proteasome-mediated degradation; presumably at stalled RNA pol II where TC-NER has failed, to halt global transcription and enable 'last resort' DNA repair pathways.

The protein resides in the nucleus. The catalysed reaction is RNA(n) + a ribonucleoside 5'-triphosphate = RNA(n+1) + diphosphate. Its function is as follows. DNA-dependent RNA polymerase catalyzes the transcription of DNA into RNA using the four ribonucleoside triphosphates as substrates. Largest and catalytic component of RNA polymerase II which synthesizes mRNA precursors and many functional non-coding RNAs. Forms the polymerase active center together with the second largest subunit. Pol II is the central component of the basal RNA polymerase II transcription machinery. It is composed of mobile elements that move relative to each other. RPB1 is part of the core element with the central large cleft, the clamp element that moves to open and close the cleft and the jaws that are thought to grab the incoming DNA template. At the start of transcription, a single-stranded DNA template strand of the promoter is positioned within the central active site cleft of Pol II. A bridging helix emanates from RPB1 and crosses the cleft near the catalytic site and is thought to promote translocation of Pol II by acting as a ratchet that moves the RNA-DNA hybrid through the active site by switching from straight to bent conformations at each step of nucleotide addition. During transcription elongation, Pol II moves on the template as the transcript elongates. Elongation is influenced by the phosphorylation status of the C-terminal domain (CTD) of Pol II largest subunit (RPB1), which serves as a platform for assembly of factors that regulate transcription initiation, elongation, termination and mRNA processing. This is DNA-directed RNA polymerase II subunit rpb1 (rpb1) from Schizosaccharomyces pombe (strain 972 / ATCC 24843) (Fission yeast).